Here is a 159-residue protein sequence, read N- to C-terminus: uncharacterized protein (159 aa).

4 helical membrane-spanning segments follow: residues 22 to 42, 45 to 65, 80 to 100, and 104 to 124; these read LFSS…SFTI, PIEY…LLTL, IWVS…SLSL, and FPSL…CLAF.

The protein localises to the membrane. This is an uncharacterized protein from Schizosaccharomyces pombe (strain 972 / ATCC 24843) (Fission yeast).